A 394-amino-acid chain; its full sequence is Obg-like ATPase 1 (394 aa).

Positions 25 to 282 constitute an OBG-type G domain; sequence LKIGIVGLPN…MPPDEAAKYC (258 aa). ATP contacts are provided by residues 34–39, 56–60, and 94–97; these read NVGKST, FCTID, and DIAG. 34-39 serves as a coordination point for GTP; that stretch reads NVGKST. 2 residues coordinate Mg(2+): Ser38 and Thr58. 2 residues coordinate GTP: Phe129 and Asn230. ATP contacts are provided by residues 230–231, Met231, and 263–265; these read NM and SCA. 263-265 is a binding site for GTP; sequence SCA. The region spanning 303–386 is the TGS domain; it reads HLIYFFTAGP…QDGDIIFFKF (84 aa).

The protein belongs to the TRAFAC class OBG-HflX-like GTPase superfamily. OBG GTPase family. YchF/OLA1 subfamily. As to quaternary structure, monomer (Potential). Interacts with GAP1. The cofactor is Mg(2+).

The protein resides in the cell membrane. Its subcellular location is the cytoplasm. It localises to the cytosol. Its activity is regulated as follows. Activated by GAP1. Its function is as follows. Hydrolyzes ATP, and can also hydrolyze GTP with lower efficiency. Has lower affinity for GTP (Potential). Exhibits GTPase activity. Exhibits similar binding affinities and hydrolytic activities toward both GTP and ATP. Binds to the 26 S ribosomal RNA in vitro, but not to the 5.8 S or 18 S rRNA. Confers sensitivity to salinity stress by suppressing the anti-oxidation enzymatic activities and increasing lipid peroxidation thus leading to the accumulation of reactive oxygen species (ROS). This chain is Obg-like ATPase 1, found in Oryza sativa subsp. japonica (Rice).